The sequence spans 241 residues: Thiamine import ATP-binding protein ThiQ (241 aa).

The 229-residue stretch at 7-235 (IRLSDVRFSY…AGPEALRHYI (229 aa)) folds into the ABC transporter domain. 37 to 44 (GPSGSGKS) provides a ligand contact to ATP.

It belongs to the ABC transporter superfamily. Thiamine importer (TC 3.A.1.19.1) family. In terms of assembly, the complex is composed of two ATP-binding proteins (ThiQ), two transmembrane proteins (ThiP) and a solute-binding protein (ThiB).

The protein resides in the cell inner membrane. The enzyme catalyses thiamine(out) + ATP + H2O = thiamine(in) + ADP + phosphate + H(+). Its function is as follows. Part of the ABC transporter complex ThiBPQ involved in thiamine import. Responsible for energy coupling to the transport system. In Brucella melitensis biotype 1 (strain ATCC 23456 / CCUG 17765 / NCTC 10094 / 16M), this protein is Thiamine import ATP-binding protein ThiQ.